A 950-amino-acid chain; its full sequence is A disintegrin and metalloproteinase with thrombospondin motifs 15 (950 aa).

An N-terminal signal peptide occupies residues 1 to 17; that stretch reads MLLLGILTLAFAGRTAG. A propeptide spanning residues 18 to 212 is cleaved from the precursor; it reads GSEPEREVVV…SRRRSGRAKR (195 aa). Asn-141 carries N-linked (GlcNAc...) asparagine glycosylation. Residues 151–172 form a disordered region; it reads SQGAHLLQRRGVPGGPSGDPTS. The short motif at 172 to 179 is the Cysteine switch element; that stretch reads SRCGVASG. Residue Cys-174 coordinates Zn(2+). A Peptidase M12B domain is found at 218 to 427; sequence RYVETLVVAD…GHGDCLLDQP (210 aa). 11 cysteine pairs are disulfide-bonded: Cys-293–Cys-345, Cys-322–Cys-327, Cys-339–Cys-422, Cys-377–Cys-406, Cys-448–Cys-470, Cys-459–Cys-480, Cys-465–Cys-499, Cys-493–Cys-504, Cys-528–Cys-565, Cys-532–Cys-570, and Cys-543–Cys-555. Zn(2+) is bound at residue His-361. The active site involves Glu-362. His-365 and His-371 together coordinate Zn(2+). The 88-residue stretch at 428–515 folds into the Disintegrin domain; that stretch reads SKPISLPEDL…ERHNLNKHRV (88 aa). In terms of domain architecture, TSP type-1 1 spans 516–571; that stretch reads DGSWAKWDPYGPCSRTCGGGVQLARRQCTNPTPANGGKYCEGVRVKYRSCNLEPCP. N-linked (GlcNAc...) asparagine glycans are attached at residues Asn-591, Asn-623, and Asn-679. The interval 701-838 is spacer; sequence AIPAGASSID…SNQVEQPDDR (138 aa). Positions 798–822 are disordered; that stretch reads FYLPKEPREDKSSHPKDPRGPSVLH. Basic and acidic residues predominate over residues 802 to 816; that stretch reads KEPREDKSSHPKDPR. 2 TSP type-1 domains span residues 839-895 and 896-949; these read PPAR…EPCP and TWEL…VLRP.

Zn(2+) is required as a cofactor. In terms of processing, the precursor is cleaved by a furin endopeptidase. Glycosylated. Can be O-fucosylated by POFUT2 on a serine or a threonine residue found within the consensus sequence C1-X(2)-(S/T)-C2-G of the TSP type-1 repeat domains where C1 and C2 are the first and second cysteine residue of the repeat, respectively. Fucosylated repeats can then be further glycosylated by the addition of a beta-1,3-glucose residue by the glucosyltransferase, B3GALTL. Fucosylation mediates the efficient secretion of ADAMTS family members. Can be C-glycosylated with one or two mannose molecules on tryptophan residues within the consensus sequence W-X-X-W of the TPRs. Also N-glycosylated. These other glycosylations can also facilitate secretion. Expressed in fetal liver and kidney, but not in any of the adult tissues examined.

It is found in the secreted. It localises to the extracellular space. The protein localises to the extracellular matrix. The protein resides in the cell surface. Its function is as follows. Metalloprotease which has proteolytic activity against the proteoglycan VCAN, cleaving it at the 'Glu-1428-|-1429-Ala' site. Cleaves VCAN in the pericellular matrix surrounding myoblasts, facilitating myoblast contact and fusion which is required for skeletal muscle development and regeneration. This Homo sapiens (Human) protein is A disintegrin and metalloproteinase with thrombospondin motifs 15 (ADAMTS15).